The sequence spans 458 residues: Riboflavin transporter 2 (458 aa).

The next 5 helical transmembrane spans lie at 11–31 (LFGMGSWVAINGIWVELPLIV), 38–58 (WYLPSYLTVLIQMANVGPLFV), 73–93 (PVIYSIVGLGVVATFLLAFFW), 97–117 (VPLAGATHSVPLLVLCFLLSV), and 146–166 (GVSGLVPAVVALVQGVGVVHC). Residues Asn-168, Asn-176, Asn-182, and Asn-199 are each glycosylated (N-linked (GlcNAc...) asparagine). A helical transmembrane segment spans residues 204–224 (VFFLFLSAMMVVCLAAFLLLN). Positions 249 to 274 (DQALSLSHRPQEEKPMISSPDSHRRA) are disordered. The next 5 helical transmembrane spans lie at 279–299 (FGTGFYSGPELAFIFVVLAWV), 325–345 (LAATMAAVANPVACFIAMFLP), 349–369 (LVLIGLLTIVGTGFGTYIMAM), 388–408 (IVIAWVLFVLTLSYVKVIIGV), and 417–437 (ALVWCGAVVQLGSMLGALSMF).

Belongs to the riboflavin transporter family.

Its subcellular location is the cell membrane. It catalyses the reaction riboflavin(in) = riboflavin(out). Plasma membrane transporter mediating the uptake by cells of the water soluble vitamin B2/riboflavin that plays a key role in biochemical oxidation-reduction reactions of the carbohydrate, lipid, and amino acid metabolism. This chain is Riboflavin transporter 2 (rft2), found in Salmo salar (Atlantic salmon).